Here is a 196-residue protein sequence, read N- to C-terminus: Holliday junction branch migration complex subunit RuvA (196 aa).

The tract at residues 1-62 (MYEYINGLIT…ENDISLYGFI (62 aa)) is domain I. The interval 63-141 (DADEKALFNK…ELASKTGMVD (79 aa)) is domain II. Positions 142–148 (SSSNPEQ) are flexible linker. The interval 148–196 (QSQALDDALEALLALGYTAKDVKAVAQIIGRNSDTTDGYIRSALKLLVK) is domain III.

The protein belongs to the RuvA family. Homotetramer. Forms an RuvA(8)-RuvB(12)-Holliday junction (HJ) complex. HJ DNA is sandwiched between 2 RuvA tetramers; dsDNA enters through RuvA and exits via RuvB. An RuvB hexamer assembles on each DNA strand where it exits the tetramer. Each RuvB hexamer is contacted by two RuvA subunits (via domain III) on 2 adjacent RuvB subunits; this complex drives branch migration. In the full resolvosome a probable DNA-RuvA(4)-RuvB(12)-RuvC(2) complex forms which resolves the HJ.

The protein resides in the cytoplasm. The RuvA-RuvB-RuvC complex processes Holliday junction (HJ) DNA during genetic recombination and DNA repair, while the RuvA-RuvB complex plays an important role in the rescue of blocked DNA replication forks via replication fork reversal (RFR). RuvA specifically binds to HJ cruciform DNA, conferring on it an open structure. The RuvB hexamer acts as an ATP-dependent pump, pulling dsDNA into and through the RuvAB complex. HJ branch migration allows RuvC to scan DNA until it finds its consensus sequence, where it cleaves and resolves the cruciform DNA. This is Holliday junction branch migration complex subunit RuvA from Leuconostoc mesenteroides subsp. mesenteroides (strain ATCC 8293 / DSM 20343 / BCRC 11652 / CCM 1803 / JCM 6124 / NCDO 523 / NBRC 100496 / NCIMB 8023 / NCTC 12954 / NRRL B-1118 / 37Y).